The chain runs to 142 residues: Large ribosomal subunit protein uL13 (142 aa).

The protein belongs to the universal ribosomal protein uL13 family. As to quaternary structure, part of the 50S ribosomal subunit.

This protein is one of the early assembly proteins of the 50S ribosomal subunit, although it is not seen to bind rRNA by itself. It is important during the early stages of 50S assembly. This Herminiimonas arsenicoxydans protein is Large ribosomal subunit protein uL13.